The following is a 308-amino-acid chain: Tryptophan 2,3-dioxygenase (308 aa).

Residues methionine 1–glycine 35 are disordered. The segment covering alanine 17 to proline 30 has biased composition (low complexity). Substrate is bound by residues phenylalanine 77 to histidine 81, tyrosine 139, and arginine 143. Residue histidine 266 coordinates heme. Residue threonine 280 participates in substrate binding.

The protein belongs to the tryptophan 2,3-dioxygenase family. As to quaternary structure, homotetramer. The cofactor is heme.

The catalysed reaction is L-tryptophan + O2 = N-formyl-L-kynurenine. The protein operates within amino-acid degradation; L-tryptophan degradation via kynurenine pathway; L-kynurenine from L-tryptophan: step 1/2. Its function is as follows. Heme-dependent dioxygenase that catalyzes the oxidative cleavage of the L-tryptophan (L-Trp) pyrrole ring and converts L-tryptophan to N-formyl-L-kynurenine. Catalyzes the oxidative cleavage of the indole moiety. The polypeptide is Tryptophan 2,3-dioxygenase (Burkholderia ambifaria (strain ATCC BAA-244 / DSM 16087 / CCUG 44356 / LMG 19182 / AMMD) (Burkholderia cepacia (strain AMMD))).